A 363-amino-acid polypeptide reads, in one-letter code: Chalcone synthase B (363 aa).

Cys-170 is a catalytic residue.

It belongs to the thiolase-like superfamily. Chalcone/stilbene synthases family.

It catalyses the reaction (E)-4-coumaroyl-CoA + 3 malonyl-CoA + 3 H(+) = 2',4,4',6'-tetrahydroxychalcone + 3 CO2 + 4 CoA. It functions in the pathway secondary metabolite biosynthesis; flavonoid biosynthesis. The primary product of this enzyme is 4,2',4',6'-tetrahydroxychalcone (also termed naringenin-chalcone or chalcone) which can under specific conditions spontaneously isomerize into naringenin. The protein is Chalcone synthase B (CHSB) of Ipomoea cordatotriloba (Tievine).